The primary structure comprises 234 residues: Sugar fermentation stimulation protein A (234 aa).

The segment at residues 201-220 (LLSEAQQRGVEILAYKAEIS) is a DNA-binding region (H-T-H motif).

This sequence belongs to the SfsA family.

Functionally, binds to DNA non-specifically. Could be a regulatory factor involved in maltose metabolism. The sequence is that of Sugar fermentation stimulation protein A from Escherichia coli (strain 55989 / EAEC).